The sequence spans 331 residues: Threonine-phosphate decarboxylase (331 aa).

Position 192 is an N6-(pyridoxal phosphate)lysine (Lys192).

This sequence belongs to the class-I pyridoxal-phosphate-dependent aminotransferase family. In terms of assembly, homodimer. It depends on pyridoxal 5'-phosphate as a cofactor.

It is found in the cytoplasm. It carries out the reaction O-phospho-L-threonine + H(+) = (R)-1-aminopropan-2-yl phosphate + CO2. It functions in the pathway cofactor biosynthesis; adenosylcobalamin biosynthesis. Its function is as follows. Decarboxylates L-threonine-O-3-phosphate to yield (R)-1-amino-2-propanol O-2-phosphate, the precursor for the linkage between the nucleotide loop and the corrin ring in cobalamin. In Pseudomonas aeruginosa (strain ATCC 15692 / DSM 22644 / CIP 104116 / JCM 14847 / LMG 12228 / 1C / PRS 101 / PAO1), this protein is Threonine-phosphate decarboxylase (cobC).